An 808-amino-acid chain; its full sequence is Receptor like protein 27 (808 aa).

An N-terminal signal peptide occupies residues 1–31; that stretch reads MLFFIKVFMKTILSVLLLFFIFASSFTLVVG. The Extracellular segment spans residues 32–740; that stretch reads LAGCRPDQIQ…DEDEEVLNWK (709 aa). 7 N-linked (GlcNAc...) asparagine glycosylation sites follow: asparagine 56, asparagine 68, asparagine 90, asparagine 103, asparagine 108, asparagine 144, and asparagine 167. LRR repeat units follow at residues 96–120, 122–144, 145–170, 172–192, 193–218, 220–241, 242–265, 266–291, 293–314, 315–338, 340–363, and 364–387; these read LQHLRYLNLSNNNFTSASLPSGFGN, NRLEVLYLSSNGFLGQVPSSFSN, LSQLNILDLSHNELTGSFPFVQNLTK, SILVLSYNHFSGTIPSSLLTL, PFLSSLDLRENYLTGSIEAPNSSTSS, LEFMYLGNNHFEGQILEPISKL, INLKHLDLSFLKTSYPIDLNLFSS, FKSLVRLVLSGNSLLATSITSDSKIP, NLENLVLLSCGLIEFPTILKNL, TKLEHIDLSNNKIKGKVPEWFWNL, RLRRVNLFNNLFTDLEGSEEVLVN, and SSVRLLDLAYNHFRGPFPKPPLSI. The N-linked (GlcNAc...) asparagine glycan is linked to asparagine 213. Asparagine 313 carries an N-linked (GlcNAc...) asparagine glycan. N-linked (GlcNAc...) asparagine glycosylation occurs at asparagine 363. The stretch at 388–407 is one LRR 13; degenerate repeat; sequence NLLSAWNNSFTGNIPLETCN. N-linked (GlcNAc...) asparagine glycosylation is found at asparagine 394, asparagine 407, and asparagine 420. 10 LRR repeats span residues 408 to 434, 436 to 456, 457 to 481, 483 to 504, 505 to 529, 532 to 556, 601 to 625, 626 to 649, 650 to 673, and 675 to 698; these read RSSLAILDLSYNNLTGPIPRCLSDFQE, LIVVNLRKNNLEGSLPDIFSD, GALLRTLDVGYNQLTGKLPRSLLNC, MLRFVSVDHNKIKDTFPFWLKA, LPDLQALTLRSNKFHGPISPPDRGP, FPKLRILEISDNNFTGSLPPNYFVN, LTSYATIDFSGNKLEGQIPESIGLL, KALIALNLSNNAFTGHIPLSLANV, TELESLDLSRNQLSGTIPNGLKTL, and FLAYISVAHNQLIGEIPQGTQITG. The N-linked (GlcNAc...) asparagine glycan is linked to asparagine 480. N-linked (GlcNAc...) asparagine glycosylation occurs at asparagine 544. N-linked (GlcNAc...) asparagine glycans are attached at residues asparagine 632 and asparagine 648. The chain crosses the membrane as a helical span at residues 741–761; that stretch reads AVVIGYWPGLLLGLIMAHVIA. Topologically, residues 762–808 are cytoplasmic; the sequence is SFKPKWLVKIVGPEKRKEDNPVRLFMTLDSRWDSFNNKKNVEQKSDM.

This sequence belongs to the RLP family.

It is found in the cell membrane. This Arabidopsis thaliana (Mouse-ear cress) protein is Receptor like protein 27.